Reading from the N-terminus, the 416-residue chain is Cytochrome P450 monooxygenase PikC (416 aa).

Substrate contacts are provided by residues glutamate 94, 187–191 (AQTAM), and 238–246 (HILLVAGHE). Heme is bound at residue cysteine 354.

It belongs to the cytochrome P450 family. Requires heme as cofactor.

It carries out the reaction narbomycin + 2 reduced [2Fe-2S]-[ferredoxin] + O2 + 2 H(+) = pikromycin + 2 oxidized [2Fe-2S]-[ferredoxin] + H2O. The catalysed reaction is narbomycin + 2 reduced [2Fe-2S]-[ferredoxin] + O2 + 2 H(+) = neopikromycin + 2 oxidized [2Fe-2S]-[ferredoxin] + H2O. It catalyses the reaction narbomycin + 4 reduced [2Fe-2S]-[ferredoxin] + 2 O2 + 4 H(+) = novapikromycin + 4 oxidized [2Fe-2S]-[ferredoxin] + 2 H2O. The enzyme catalyses 10-deoxymethymycin + 2 reduced [2Fe-2S]-[ferredoxin] + O2 + 2 H(+) = methymycin + 2 oxidized [2Fe-2S]-[ferredoxin] + H2O. It carries out the reaction 10-deoxymethymycin + 2 reduced [2Fe-2S]-[ferredoxin] + O2 + 2 H(+) = neomethymycin + 2 oxidized [2Fe-2S]-[ferredoxin] + H2O. The catalysed reaction is 10-deoxymethymycin + 4 reduced [2Fe-2S]-[ferredoxin] + 2 O2 + 4 H(+) = novamethymycin + 4 oxidized [2Fe-2S]-[ferredoxin] + 2 H2O. It functions in the pathway antibiotic biosynthesis. Functionally, catalyzes the hydroxylation of narbomycin to give rise to pikromycin, and of 10-deoxymethymycin (YC-17) to give rise to methymycin and neomethymycin during macrolide antibiotic biosynthesis. In addition, produces low amounts of neopicromycin, novapikromycin and novamethymycin. Requires the participation of a ferredoxin and a ferredoxin reductase for the transfer of electrons from NADPH to the monooxygenase. The chain is Cytochrome P450 monooxygenase PikC from Streptomyces venezuelae.